The following is a 274-amino-acid chain: tRNA-cytidine(32) 2-sulfurtransferase (274 aa).

A PP-loop motif motif is present at residues Ser40–Ser45. Residues Cys115, Cys118, and Cys206 each contribute to the [4Fe-4S] cluster site.

This sequence belongs to the TtcA family. In terms of assembly, homodimer. Mg(2+) serves as cofactor. Requires [4Fe-4S] cluster as cofactor.

It localises to the cytoplasm. The catalysed reaction is cytidine(32) in tRNA + S-sulfanyl-L-cysteinyl-[cysteine desulfurase] + AH2 + ATP = 2-thiocytidine(32) in tRNA + L-cysteinyl-[cysteine desulfurase] + A + AMP + diphosphate + H(+). Its pathway is tRNA modification. Functionally, catalyzes the ATP-dependent 2-thiolation of cytidine in position 32 of tRNA, to form 2-thiocytidine (s(2)C32). The sulfur atoms are provided by the cysteine/cysteine desulfurase (IscS) system. The polypeptide is tRNA-cytidine(32) 2-sulfurtransferase (Pseudomonas syringae pv. syringae (strain B728a)).